Consider the following 91-residue polypeptide: DNA-directed RNA polymerase subunit omega (91 aa).

The protein belongs to the RNA polymerase subunit omega family. As to quaternary structure, the RNAP catalytic core consists of 2 alpha, 1 beta, 1 beta' and 1 omega subunit. When a sigma factor is associated with the core the holoenzyme is formed, which can initiate transcription.

The catalysed reaction is RNA(n) + a ribonucleoside 5'-triphosphate = RNA(n+1) + diphosphate. Its function is as follows. Promotes RNA polymerase assembly. Latches the N- and C-terminal regions of the beta' subunit thereby facilitating its interaction with the beta and alpha subunits. The polypeptide is DNA-directed RNA polymerase subunit omega (Yersinia enterocolitica serotype O:8 / biotype 1B (strain NCTC 13174 / 8081)).